The chain runs to 777 residues: Translation initiation factor IF-2 (777 aa).

Disordered stretches follow at residues 30–54 and 98–117; these read SPSM…QDEN and EDSN…SFKE. A compositionally biased stretch (basic and acidic residues) spans 98–109; it reads EDSNEKTNDRDS. One can recognise a tr-type G domain in the interval 279 to 449; sequence PKPPIVTFMG…LLIAELMKLE (171 aa). Residues 288–295 form a G1 region; the sequence is GHVDHGKT. 288 to 295 provides a ligand contact to GTP; the sequence is GHVDHGKT. Residues 313-317 are G2; sequence GITQH. Residues 334-337 form a G3 region; it reads DTPG. GTP is bound by residues 334-338 and 388-391; these read DTPGH and NKID. The G4 stretch occupies residues 388-391; that stretch reads NKID. Residues 425 to 427 form a G5 region; that stretch reads SAK.

The protein belongs to the TRAFAC class translation factor GTPase superfamily. Classic translation factor GTPase family. IF-2 subfamily.

It localises to the cytoplasm. One of the essential components for the initiation of protein synthesis. Protects formylmethionyl-tRNA from spontaneous hydrolysis and promotes its binding to the 30S ribosomal subunits. Also involved in the hydrolysis of GTP during the formation of the 70S ribosomal complex. This Wolbachia sp. subsp. Brugia malayi (strain TRS) protein is Translation initiation factor IF-2.